The chain runs to 257 residues: MDSEDRPIGFFDSGVGGISVLKEAVKILSNENFVYFGDSKMAPYGVRTVEEVKKLTFNAVEFLLKKNIKALVVACNTATSAAIIDLRKAYSKYMPIVGIEPALKPAVECNRKGNIIIMATPMTLAESKFNNLMKRYSNSNILPLPCSGLVELIEEGKTEGEEIERYLEEKLIPLKGNGIAAVVLGCTHYPFIKKSISKVLNQDVLILDGSKGTVRQLKRQLIKYHIESNKSKIGKIKIFNSMNSQYIIKLSYKLLKE.

Substrate-binding positions include 12–13 (DS) and 44–45 (YG). Residue Cys75 is the Proton donor/acceptor of the active site. 76-77 (NT) is a binding site for substrate. Cys186 (proton donor/acceptor) is an active-site residue. 187 to 188 (TH) contributes to the substrate binding site.

It belongs to the aspartate/glutamate racemases family.

The enzyme catalyses L-glutamate = D-glutamate. The protein operates within cell wall biogenesis; peptidoglycan biosynthesis. In terms of biological role, provides the (R)-glutamate required for cell wall biosynthesis. This chain is Glutamate racemase, found in Clostridium kluyveri (strain NBRC 12016).